We begin with the raw amino-acid sequence, 136 residues long: Heavy metal-associated isoprenylated plant protein 19 (136 aa).

The region spanning 13–77 (YMDVEFNVSM…LKKKTGKRVK (65 aa)) is the HMA domain. Residues cysteine 24 and cysteine 27 each coordinate a metal cation. Cysteine 133 is modified (cysteine methyl ester). Cysteine 133 carries the S-farnesyl cysteine lipid modification. A propeptide spans 134–136 (SIS) (removed in mature form).

This sequence belongs to the HIPP family.

Functionally, heavy-metal-binding protein. The polypeptide is Heavy metal-associated isoprenylated plant protein 19 (Arabidopsis thaliana (Mouse-ear cress)).